The chain runs to 633 residues: E3 ubiquitin-protein ligase ZSWIM2 (633 aa).

Residues 54-87 form an SWIM-type zinc finger; that stretch reads FRVFLGNPHVCNCSTFPKGGELCKHICWVLLKKF. An RING-type 1 zinc finger spans residues 147–198; sequence CSICQELLLEKKLPVTFCRFGCGNSIHIKCMKILANYQSTSNTSMLKCPLCR. Residues 229–280 form a ZZ-type zinc finger; that stretch reads HLGIPCNNCKQFPIEGKCYKCTECIEYHLCQECFDSCCHLSHTFTFREKRNQ. Cys234, Cys237, Cys249, Cys252, Cys258, Cys261, His267, and His270 together coordinate Zn(2+). An RING-type 2 zinc finger spans residues 344-388; the sequence is CLLCLKAFHLGQHTRLLPCTHKFHRKCIDNWLFHKCNSCPIDGQV.

As to quaternary structure, dimer. Interacts with UBE2D1. In terms of processing, polyubiquitinated. Polyubiquitination is followed by degradation via the proteasome. In terms of tissue distribution, expression is testis-specific.

It catalyses the reaction S-ubiquitinyl-[E2 ubiquitin-conjugating enzyme]-L-cysteine + [acceptor protein]-L-lysine = [E2 ubiquitin-conjugating enzyme]-L-cysteine + N(6)-ubiquitinyl-[acceptor protein]-L-lysine.. Its function is as follows. E3 ubiquitin-protein ligase involved in the regulation of Fas-, DR3- and DR4-mediated apoptosis. Functions in conjunction with the UBE2D1, UBE2D3 and UBE2E1 E2 ubiquitin-conjugating enzymes. This is E3 ubiquitin-protein ligase ZSWIM2 from Homo sapiens (Human).